A 505-amino-acid polypeptide reads, in one-letter code: Alpha-1-syntrophin (505 aa).

The segment at 1-77 is disordered; sequence MASGRRAPRT…AEPGAASPPL (77 aa). 2 PH domains span residues 6–269 and 293–401; these read RAPR…AQVN and DIKR…DGCH. The PDZ domain occupies 87–170; sequence RVTVRKADAG…EVVLEVKYMK (84 aa). Phosphoserine is present on residues serine 101, serine 184, serine 189, serine 193, and serine 200. A disordered region spans residues 180-211; sequence ASGTSVGWDSPPASPLQRQPSSPGPPPRDLRD. In terms of domain architecture, SU spans 449–505; it reads PFEKLQMSSDDGASLLFLDFGGAEGEIQLDLHSCPKTMVFIIHSFLSAKVTRLGLLA. The interval 483–505 is calmodulin-binding; sequence PKTMVFIIHSFLSAKVTRLGLLA.

The protein belongs to the syntrophin family. As to quaternary structure, monomer and homodimer. Interacts with the dystrophin related protein DTNA; SGCG of the dystrophin glycoprotein complex; NOS1; GRB2; GA; TGFA; MAPK12 and the sodium channel proteins SCN4A and SCN5A. Interacts with the dystrophin protein DMD in a calmodulin dependent manner and with related protein UTRN; SGCA of the dystrophin glycoprotein complex; F-actin; calmodulin and with the other members of the syntrophin family SNTB1 and SNTB2. Interacts with MYOC; regulates muscle hypertrophy. Interacts with DTNB. Post-translationally, phosphorylated by CaM-kinase II. Phosphorylation may inhibit the interaction with DMD.

Its subcellular location is the cell membrane. It is found in the sarcolemma. The protein localises to the cell junction. The protein resides in the cytoplasm. It localises to the cytoskeleton. Its function is as follows. Adapter protein that binds to and probably organizes the subcellular localization of a variety of membrane proteins. May link various receptors to the actin cytoskeleton and the extracellular matrix via the dystrophin glycoprotein complex. Plays an important role in synapse formation and in the organization of UTRN and acetylcholine receptors at the neuromuscular synapse. Binds to phosphatidylinositol 4,5-bisphosphate. The protein is Alpha-1-syntrophin (SNTA1) of Bos taurus (Bovine).